Reading from the N-terminus, the 441-residue chain is Putative F-box protein At1g33530 (441 aa).

Residues 91 to 137 (TTLAVELPDVLVEEILQRLPVKYLVRLKSISKGWKSLIESDHLAEKH) enclose the F-box domain.

The polypeptide is Putative F-box protein At1g33530 (Arabidopsis thaliana (Mouse-ear cress)).